Consider the following 265-residue polypeptide: Putative hydro-lyase PST_2764 (265 aa).

This sequence belongs to the D-glutamate cyclase family.

The polypeptide is Putative hydro-lyase PST_2764 (Stutzerimonas stutzeri (strain A1501) (Pseudomonas stutzeri)).